Consider the following 865-residue polypeptide: Cadherin-related family member 1 (865 aa).

The first 23 residues, 1–23 (MKHVRHFIPSLFLSLVHVCLVQA), serve as a signal peptide directing secretion. The Extracellular portion of the chain corresponds to 24 to 705 (NYAPYFFDNG…TKDNPMKALG (682 aa)). 6 Cadherin domains span residues 38–137 (NGNM…SPEF), 138–249 (INTP…PPMF), 250–356 (IGTP…PPTF), 362–475 (PQNR…VPKF), 476–579 (SSDY…SPEF), and 571–690 (DVND…GPMA). A helical membrane pass occupies residues 706-726 (VLAGVMGIMVLITIMISTAMF). At 727–865 (WRNKRSNKIM…RNASMGEPHI (139 aa)) the chain is on the cytoplasmic side. Residues 782-810 (ENSNNNVQAAPVPPAAPLPPPPPALAASG) are disordered. The span at 792–805 (PVPPAAPLPPPPPA) shows a compositional bias: pro residues.

The protein resides in the membrane. Potential calcium-dependent cell-adhesion protein. The sequence is that of Cadherin-related family member 1 (CDHR1) from Gallus gallus (Chicken).